Reading from the N-terminus, the 342-residue chain is S-adenosylmethionine:tRNA ribosyltransferase-isomerase (342 aa).

It belongs to the QueA family. In terms of assembly, monomer.

The protein localises to the cytoplasm. The catalysed reaction is 7-aminomethyl-7-carbaguanosine(34) in tRNA + S-adenosyl-L-methionine = epoxyqueuosine(34) in tRNA + adenine + L-methionine + 2 H(+). The protein operates within tRNA modification; tRNA-queuosine biosynthesis. Transfers and isomerizes the ribose moiety from AdoMet to the 7-aminomethyl group of 7-deazaguanine (preQ1-tRNA) to give epoxyqueuosine (oQ-tRNA). This Campylobacter jejuni subsp. jejuni serotype O:23/36 (strain 81-176) protein is S-adenosylmethionine:tRNA ribosyltransferase-isomerase.